Here is a 182-residue protein sequence, read N- to C-terminus: Inorganic pyrophosphatase (182 aa).

The substrate site is built by Lys-30, Arg-44, and Tyr-56. Mg(2+) contacts are provided by Asp-66, Asp-71, and Asp-103. Substrate is bound at residue Tyr-142.

This sequence belongs to the PPase family. As to quaternary structure, homohexamer. Requires Mg(2+) as cofactor.

The protein localises to the cytoplasm. It carries out the reaction diphosphate + H2O = 2 phosphate + H(+). Catalyzes the hydrolysis of inorganic pyrophosphate (PPi) forming two phosphate ions. In Buchnera aphidicola subsp. Acyrthosiphon pisum (strain APS) (Acyrthosiphon pisum symbiotic bacterium), this protein is Inorganic pyrophosphatase.